A 213-amino-acid chain; its full sequence is Ribosomal RNA small subunit methyltransferase G (213 aa).

S-adenosyl-L-methionine-binding positions include Gly75, Phe80, 128-129, and Arg144; that span reads IE.

This sequence belongs to the methyltransferase superfamily. RNA methyltransferase RsmG family.

It is found in the cytoplasm. The catalysed reaction is guanosine(527) in 16S rRNA + S-adenosyl-L-methionine = N(7)-methylguanosine(527) in 16S rRNA + S-adenosyl-L-homocysteine. In terms of biological role, specifically methylates the N7 position of guanine in position 527 of 16S rRNA. This chain is Ribosomal RNA small subunit methyltransferase G, found in Brucella anthropi (strain ATCC 49188 / DSM 6882 / CCUG 24695 / JCM 21032 / LMG 3331 / NBRC 15819 / NCTC 12168 / Alc 37) (Ochrobactrum anthropi).